A 399-amino-acid polypeptide reads, in one-letter code: Putative endoplasmin-like protein (399 aa).

K130 is covalently cross-linked (Glycyl lysine isopeptide (Lys-Gly) (interchain with G-Cter in SUMO2)). Residues 350 to 399 (LDLAVVEEPDEEPEETAEDKEQDKDKEMDVGTDEEKQETAKESTAEKDEL) are disordered. Over residues 354-367 (VVEEPDEEPEETAE) the composition is skewed to acidic residues. Over residues 368-399 (DKEQDKDKEMDVGTDEEKQETAKESTAEKDEL) the composition is skewed to basic and acidic residues.

Belongs to the heat shock protein 90 family.

In terms of biological role, putative molecular chaperone. The chain is Putative endoplasmin-like protein (HSP90B2P) from Homo sapiens (Human).